A 1059-amino-acid chain; its full sequence is Kinesin-like protein KIN-7K, chloroplastic (1059 aa).

Composition is skewed to low complexity over residues 1-35 (MSSRPSSSASSRRSSSPFSAGSRRPPTSSSSSAGS) and 43-58 (PRSYSTASSVSSSSHF). Residues 1–48 (MSSRPSSSASSRRSSSPFSAGSRRPPTSSSSSAGSYLTGRLMPRSYST) constitute a chloroplast transit peptide. The disordered stretch occupies residues 1–99 (MSSRPSSSAS…SPPSPVPFPS (99 aa)). Gly residues predominate over residues 59–69 (FGGGGGSGGGS). Low complexity predominate over residues 70-87 (RSTTPGRRGSSSSSLVGP). Positions 88 to 97 (VPSPPSPVPF) are enriched in pro residues. A Kinesin motor domain is found at 114–431 (SISVTIRFRP…LKFASRAKRV (318 aa)). 194 to 201 (GVTSSGKT) contacts ATP. A coiled-coil region spans residues 435-518 (AARNRMIDEK…IQRLTKLILV (84 aa)). The disordered stretch occupies residues 526–570 (ALTDTSSHQRHNSVNEEDKVSTSQDSSMLVQNDSATKDSLSSASP). The segment covering 546–569 (STSQDSSMLVQNDSATKDSLSSAS) has biased composition (polar residues). Coiled coils occupy residues 640 to 674 (EGTKNQIDNLEREIREKRRHMRALEQKLMESGEAS), 700 to 781 (ELEL…EENR), and 862 to 910 (LEDM…LEND). Residues 1013–1048 (CKVCFESATAAVLLPCRHFCLCKPCSLACSECPLCR) form an RING-type zinc finger.

Belongs to the TRAFAC class myosin-kinesin ATPase superfamily. Kinesin family. KIN-7 subfamily.

The protein resides in the plastid. It is found in the chloroplast. The sequence is that of Kinesin-like protein KIN-7K, chloroplastic from Oryza sativa subsp. japonica (Rice).